An 85-amino-acid polypeptide reads, in one-letter code: MNYLVFFSLALLLMTGVESVRDGYIADDKNCAYFCGRNAYCDDECKKNGAESGYCQWAGVYGNACWCYKLPDKVPIRVPGKCNGG.

Positions 1–19 are cleaved as a signal peptide; sequence MNYLVFFSLALLLMTGVES. One can recognise an LCN-type CS-alpha/beta domain in the interval 21-83; the sequence is RDGYIADDKN…VPIRVPGKCN (63 aa). 4 disulfides stabilise this stretch: Cys31–Cys82, Cys35–Cys55, Cys41–Cys65, and Cys45–Cys67.

This sequence belongs to the long (4 C-C) scorpion toxin superfamily. Sodium channel inhibitor family. Alpha subfamily. In terms of tissue distribution, expressed by the venom gland.

The protein localises to the secreted. Functionally, binds to sodium channels (Nav) and inhibits the inactivation of the activated channels, thereby blocking neuronal transmission. Tested on mice, has antitumor effect and strong inhibitory effect on pain. The chain is Toxin BmKT from Olivierus martensii (Manchurian scorpion).